The following is a 485-amino-acid chain: Phosphoglucosamine mutase (485 aa).

Residue Ser133 is the Phosphoserine intermediate of the active site. 4 residues coordinate Mg(2+): Ser133, Asp274, Asp276, and Asp278. The residue at position 133 (Ser133) is a Phosphoserine.

The protein belongs to the phosphohexose mutase family. It depends on Mg(2+) as a cofactor. Post-translationally, activated by phosphorylation.

The enzyme catalyses alpha-D-glucosamine 1-phosphate = D-glucosamine 6-phosphate. In terms of biological role, catalyzes the conversion of glucosamine-6-phosphate to glucosamine-1-phosphate. This chain is Phosphoglucosamine mutase, found in Rippkaea orientalis (strain PCC 8801 / RF-1) (Cyanothece sp. (strain PCC 8801)).